Here is a 373-residue protein sequence, read N- to C-terminus: 4-hydroxy-3-methylbut-2-en-1-yl diphosphate synthase (flavodoxin) (373 aa).

4 residues coordinate [4Fe-4S] cluster: C270, C273, C305, and E312.

It belongs to the IspG family. Requires [4Fe-4S] cluster as cofactor.

It carries out the reaction (2E)-4-hydroxy-3-methylbut-2-enyl diphosphate + oxidized [flavodoxin] + H2O + 2 H(+) = 2-C-methyl-D-erythritol 2,4-cyclic diphosphate + reduced [flavodoxin]. The protein operates within isoprenoid biosynthesis; isopentenyl diphosphate biosynthesis via DXP pathway; isopentenyl diphosphate from 1-deoxy-D-xylulose 5-phosphate: step 5/6. Converts 2C-methyl-D-erythritol 2,4-cyclodiphosphate (ME-2,4cPP) into 1-hydroxy-2-methyl-2-(E)-butenyl 4-diphosphate. The protein is 4-hydroxy-3-methylbut-2-en-1-yl diphosphate synthase (flavodoxin) of Klebsiella pneumoniae subsp. pneumoniae (strain ATCC 700721 / MGH 78578).